The following is a 671-amino-acid chain: DNA ligase (671 aa).

NAD(+) is bound by residues 32–36, 81–82, and E113; these read DAEYD and SL. K115 serves as the catalytic N6-AMP-lysine intermediate. R136, E173, K290, and K314 together coordinate NAD(+). C408, C411, C426, and C432 together coordinate Zn(2+). A BRCT domain is found at 593 to 671; that stretch reads EIDSPFAGKT…EAEMLRLLGS (79 aa).

Belongs to the NAD-dependent DNA ligase family. LigA subfamily. Mg(2+) serves as cofactor. Mn(2+) is required as a cofactor.

It carries out the reaction NAD(+) + (deoxyribonucleotide)n-3'-hydroxyl + 5'-phospho-(deoxyribonucleotide)m = (deoxyribonucleotide)n+m + AMP + beta-nicotinamide D-nucleotide.. DNA ligase that catalyzes the formation of phosphodiester linkages between 5'-phosphoryl and 3'-hydroxyl groups in double-stranded DNA using NAD as a coenzyme and as the energy source for the reaction. It is essential for DNA replication and repair of damaged DNA. This Shigella boydii serotype 4 (strain Sb227) protein is DNA ligase.